Reading from the N-terminus, the 209-residue chain is Probable glutathione peroxidase 8 (209 aa).

An N-acetylmethionine modification is found at Met-1. A helical transmembrane segment spans residues Ile-18–Leu-40. Residue Cys-79 is part of the active site.

Belongs to the glutathione peroxidase family.

The protein resides in the membrane. The catalysed reaction is 2 glutathione + H2O2 = glutathione disulfide + 2 H2O. The chain is Probable glutathione peroxidase 8 (Gpx8) from Mus musculus (Mouse).